A 207-amino-acid polypeptide reads, in one-letter code: SPRY domain-containing protein 4 (207 aa).

A B30.2/SPRY domain is found at 12-207 (YRWGTKRWGV…HSGLEVPKGL (196 aa)). Lys53 and Lys130 each carry N6-acetyllysine. The residue at position 139 (Lys139) is an N6-succinyllysine.

This chain is SPRY domain-containing protein 4 (Spryd4), found in Mus musculus (Mouse).